The following is a 740-amino-acid chain: Arf-GAP with coiled-coil, ANK repeat and PH domain-containing protein 1 (740 aa).

A BAR domain is found at 1–226; it reads MTVKLDFEEC…RKELGAQLHQ (226 aa). Residues 1–382 form a required for formation of endosomal tubules when overexpressed with PIP5K1C region; it reads MTVKLDFEEC…RGPGQGSGHL (382 aa). Residues 265-360 form the PH domain; sequence GLVMEGHLFK…WVSAVQSSIA (96 aa). Positions 405–527 constitute an Arf-GAP domain; it reads GHVVAQVQSV…KFLTKLPEIR (123 aa). The tract at residues 405–740 is required for interaction with GULP1; the sequence is GHVVAQVQSV…SRRSHDLHTL (336 aa). Residues 420–443 form a C4-type zinc finger; that stretch reads CCDCREPAPEWASINLGVTLCIQC. 3'-nitrotyrosine is present on Tyr485. The tract at residues 525-566 is prevents interaction with ITGB1 when S-554 is not phosphorylated; the sequence is EIRGRRGGRGRPRGQPPVPPKPSIRPRPGSLRSKPEPPSEDL. The disordered stretch occupies residues 525–581; it reads EIRGRRGGRGRPRGQPPVPPKPSIRPRPGSLRSKPEPPSEDLGSLHPGALLFRASGH. The segment covering 538–549 has biased composition (pro residues); it reads GQPPVPPKPSIR. At Ser554 the chain carries Phosphoserine; by PKB. ANK repeat units follow at residues 606–635, 639–668, and 672–702; these read DNAT…NVNQ, AGRG…DLGA, and EGRD…EAEA.

In terms of assembly, banana-shaped homodimer laterally assembling into tetramers, the tetramers further pack helically onto the membrane. Interacts with GTP-bound ARF6. Interacts with third cytoplasmic loop of SLC2A4/GLUT4. Interacts with CLTC. Interacts with GULP1. Forms a complex with GDP-bound ARF6 and GULP1. Interacts with ITGB1; required for ITGB1 recycling. Phosphorylation at Ser-554 by PKB is required for interaction with ITGB1, export of ITGB1 from recycling endosomes to the cell surface and ITGB1-dependent cell migration. As to expression, highest level in lung and spleen. Low level in heart, kidney, liver and pancreas.

The protein resides in the recycling endosome membrane. With respect to regulation, GAP activity stimulated by phosphatidylinositol 4,5-bisphosphate (PIP2) and phosphatidic acid. Its function is as follows. GTPase-activating protein (GAP) for ADP ribosylation factor 6 (ARF6) required for clathrin-dependent export of proteins from recycling endosomes to trans-Golgi network and cell surface. Required for regulated export of ITGB1 from recycling endosomes to the cell surface and ITGB1-dependent cell migration. The protein is Arf-GAP with coiled-coil, ANK repeat and PH domain-containing protein 1 (ACAP1) of Homo sapiens (Human).